Here is a 159-residue protein sequence, read N- to C-terminus: Cathelicidin-5 (159 aa).

An N-terminal signal peptide occupies residues methionine 1–alanine 29. Glutamine 30 is subject to Pyrrolidone carboxylic acid. A propeptide spanning residues glutamine 30–valine 131 is cleaved from the precursor. 2 disulfide bridges follow: cysteine 86–cysteine 97 and cysteine 108–cysteine 125.

This sequence belongs to the cathelicidin family.

The protein resides in the secreted. Exerts a potent antimicrobial activity against Gram-negative and Gram-positive bacteria, including methicillin-resistant Staphylococcus aureus, and fungi. The chain is Cathelicidin-5 (CATHL5) from Bos taurus (Bovine).